We begin with the raw amino-acid sequence, 487 residues long: N-succinylglutamate 5-semialdehyde dehydrogenase (487 aa).

NAD(+) is bound at residue 221–226 (GSSDTG). Catalysis depends on residues glutamate 244 and cysteine 278.

Belongs to the aldehyde dehydrogenase family. AstD subfamily.

The enzyme catalyses N-succinyl-L-glutamate 5-semialdehyde + NAD(+) + H2O = N-succinyl-L-glutamate + NADH + 2 H(+). The protein operates within amino-acid degradation; L-arginine degradation via AST pathway; L-glutamate and succinate from L-arginine: step 4/5. Catalyzes the NAD-dependent reduction of succinylglutamate semialdehyde into succinylglutamate. This chain is N-succinylglutamate 5-semialdehyde dehydrogenase, found in Burkholderia lata (strain ATCC 17760 / DSM 23089 / LMG 22485 / NCIMB 9086 / R18194 / 383).